The chain runs to 791 residues: MSDFPGTEELESLDAYWRAANYLTVGQIYLQGNALLTRPLTLADVKPRLLGHWGTSPGLNLVYTHLNRLIHQYSLNVLFVTGPGHGGPALVAQAYLDGTYTELNPSVERNALGMARLFRQFSWPYGIGSHVGPHVPGSIHEGGELGYSLAHAYGAALDNPQLIVACVIGDGEAETGPLAASWHCNKFLNPARDGAVLPILHLNGYKIANPSVLSMISEEELTSLMYGYGYDPYFVEGDEPMEVHRALARTLDVIYEKISQIQRLARYAEDPQVVDRPLWPVLILRTPKGWTGPRYVDGQRVEGTWRSHQLPLADLDKPPHLMQLQQWLESYRPHELFDAQGTLLPELAALTPTGRRRMSANPHANGGLLLRALDLPHYADYCVPMPGPGQVRAEATRVLGGYVRDVMKNSLASQNFRLFGPDETASNRLDAVFEVTDKVWLDARASDDRHLSAQGRVMEILSEHICEGWLEGYLLTGRHGLFSCYEAFIHIVDSMINQHAKWLKTAAEVPWRKPIASLNILLTSHVWRQDHNGFSHQDPGLLDLLANKKANLARIYLPPDANCLLSVAEHCLRSRGYINVIVAGKQMEWQWLDCEAAAVHCQSGIGRWGWACHDDEMPEVVLACAGDVPTLEVLAAVTLLQEQAPDVRVRVVNVVDLMALQLSQQHPHGLSDSDFNGLFTEDRPVIFAFHGYPALIHRLIYKRANPQRFHVRGFREEGATTTPFDMAVINNLDRYQLLLDVFERVPRLQPQLEQARARYWATMEKHKLYLIEHGEDMPEVAQWRWTSASRA.

This sequence belongs to the XFP family. The cofactor is thiamine diphosphate.

This chain is Probable phosphoketolase, found in Pseudomonas putida (strain ATCC 700007 / DSM 6899 / JCM 31910 / BCRC 17059 / LMG 24140 / F1).